An 83-amino-acid chain; its full sequence is Small ribosomal subunit protein bS18 (83 aa).

This sequence belongs to the bacterial ribosomal protein bS18 family. In terms of assembly, part of the 30S ribosomal subunit. Forms a tight heterodimer with protein bS6.

Its function is as follows. Binds as a heterodimer with protein bS6 to the central domain of the 16S rRNA, where it helps stabilize the platform of the 30S subunit. This Methylobacterium radiotolerans (strain ATCC 27329 / DSM 1819 / JCM 2831 / NBRC 15690 / NCIMB 10815 / 0-1) protein is Small ribosomal subunit protein bS18.